The chain runs to 672 residues: APC membrane recruitment protein 2 (672 aa).

Over residues 1–21 the composition is skewed to gly residues; that stretch reads METGRSRGGGAAVSERGGGAR. Disordered stretches follow at residues 1–23, 74–360, and 443–560; these read METG…ARAG, TMPS…DPSA, and MLSQ…DALC. Positions 142 to 158 are enriched in low complexity; that stretch reads GSLASSSVAKSHSFFSL. Phosphoserine is present on Ser154. 2 stretches are compositionally biased toward basic and acidic residues: residues 163–175 and 201–210; these read GRSE…HAEA and RGKEEEEKAV. A phosphoserine mark is found at Ser223, Ser227, and Ser244. A compositionally biased stretch (basic and acidic residues) spans 230 to 254; it reads CVKEEPPRAARRPDSPGQDASRHAA. Residues 255-269 are compositionally biased toward low complexity; it reads GEPAGGEQAPASAES. Ser284 is subject to Phosphoserine. The segment covering 289–303 has biased composition (basic and acidic residues); that stretch reads SRGEDAEGHRREEKP. A compositionally biased stretch (low complexity) spans 343 to 354; the sequence is ASAVPDPSSVDP. Phosphoserine occurs at positions 356 and 359. Over residues 446-457 the composition is skewed to low complexity; that stretch reads QTEDQGQGTQEG. Composition is skewed to basic and acidic residues over residues 478 to 488 and 502 to 516; these read RCGEAAKDMSS and QQKE…EHQE.

This sequence belongs to the Amer family. In terms of assembly, interacts with APC.

The protein resides in the cell membrane. Its function is as follows. Negative regulator of the canonical Wnt signaling pathway involved in neuroectodermal patterning. Acts by specifically binding phosphatidylinositol 4,5-bisphosphate (PtdIns(4,5)P2), translocating to the cell membrane and interacting with key regulators of the canonical Wnt signaling pathway, such as components of the beta-catenin destruction complex. This chain is APC membrane recruitment protein 2 (Amer2), found in Mus musculus (Mouse).